The sequence spans 557 residues: 2-succinyl-5-enolpyruvyl-6-hydroxy-3-cyclohexene-1-carboxylate synthase (557 aa).

Residues Tyr183–Pro206 form a disordered region.

This sequence belongs to the TPP enzyme family. MenD subfamily. As to quaternary structure, homodimer. The cofactor is Mg(2+). Mn(2+) serves as cofactor. It depends on thiamine diphosphate as a cofactor.

The catalysed reaction is isochorismate + 2-oxoglutarate + H(+) = 5-enolpyruvoyl-6-hydroxy-2-succinyl-cyclohex-3-ene-1-carboxylate + CO2. Its pathway is quinol/quinone metabolism; 1,4-dihydroxy-2-naphthoate biosynthesis; 1,4-dihydroxy-2-naphthoate from chorismate: step 2/7. The protein operates within quinol/quinone metabolism; menaquinone biosynthesis. Functionally, catalyzes the thiamine diphosphate-dependent decarboxylation of 2-oxoglutarate and the subsequent addition of the resulting succinic semialdehyde-thiamine pyrophosphate anion to isochorismate to yield 2-succinyl-5-enolpyruvyl-6-hydroxy-3-cyclohexene-1-carboxylate (SEPHCHC). In Halorhodospira halophila (strain DSM 244 / SL1) (Ectothiorhodospira halophila (strain DSM 244 / SL1)), this protein is 2-succinyl-5-enolpyruvyl-6-hydroxy-3-cyclohexene-1-carboxylate synthase.